A 113-amino-acid chain; its full sequence is UPF0251 protein Teth514_1147 (113 aa).

The protein belongs to the UPF0251 family.

In Thermoanaerobacter sp. (strain X514), this protein is UPF0251 protein Teth514_1147.